Reading from the N-terminus, the 443-residue chain is MRLRFWLLIWLLLGFISHQPTPVINSLAVYRHRETDFGVGVRDHPGQHGKTPSPQKLDNLIIIIIGFLRRDTFTILFCTSYLCVSFLKTIFWSRNGHDGSTDVQQRAWRSNRSRQKGLRSICMHTKKRVSSFRGNKIGLKDVITLRRHVETKVRAKIRKRKVTTKINRHDKINGKRKTARKQKMFQRAQELRRRAEDYHKCKIPPSARKPLCNWVRMAAAEHRHSSGLPCWPYLTAEALKNRMGRQPPPPTQQHSITDNSLSLKTPPECLLHPLPPSVDDNIKECPLAPLPPSVDDNLKEYLLVPLPPSPLPPSVDDNLKDCLFVPLPPSPLPPSVDDNLKTPPLATQEAEAEKPPKPKRWRVDEVEQSPKPKRRRADEVEQSPKPKRQREAEAQQLPKPKRRRLSKLRTRHCTQAWAIRINPWVEKKKKIKKQNKTHAPKTN.

Positions 1-18 (MRLRFWLLIWLLLGFISH) are cleaved as a signal peptide. Asn111 carries N-linked (GlcNAc...) asparagine glycosylation. 2 disordered regions span residues 242–262 (RMGR…NSLS) and 330–413 (SPLP…TRHC). Positions 252–262 (QQHSITDNSLS) are enriched in polar residues. Basic and acidic residues predominate over residues 351-393 (EAEKPPKPKRWRVDEVEQSPKPKRRRADEVEQSPKPKRQREAE). Basic residues predominate over residues 399 to 412 (KPKRRRLSKLRTRH).

It belongs to the NPIP family.

Its subcellular location is the secreted. The sequence is that of Nuclear pore complex-interacting protein family member B15 (NPIPB15) from Homo sapiens (Human).